A 338-amino-acid polypeptide reads, in one-letter code: Ornithine carbamoyltransferase (338 aa).

Carbamoyl phosphate-binding positions include Ser56 to Thr59, Arg107, and His134 to Gln137. Residues Asn168, Asp232, and Ser236–Met237 each bind L-ornithine. Carbamoyl phosphate-binding positions include Cys274 to Leu275 and Arg320.

Belongs to the aspartate/ornithine carbamoyltransferase superfamily. OTCase family.

It localises to the cytoplasm. The catalysed reaction is carbamoyl phosphate + L-ornithine = L-citrulline + phosphate + H(+). It functions in the pathway amino-acid biosynthesis; L-arginine biosynthesis; L-arginine from L-ornithine and carbamoyl phosphate: step 1/3. Its function is as follows. Reversibly catalyzes the transfer of the carbamoyl group from carbamoyl phosphate (CP) to the N(epsilon) atom of ornithine (ORN) to produce L-citrulline. This chain is Ornithine carbamoyltransferase (argI), found in Buchnera aphidicola subsp. Schizaphis graminum (strain Sg).